The chain runs to 220 residues: 2-hydroxy-3-keto-5-methylthiopentenyl-1-phosphate phosphatase (220 aa).

It belongs to the HAD-like hydrolase superfamily. MtnX family.

It catalyses the reaction 2-hydroxy-5-methylsulfanyl-3-oxopent-1-enyl phosphate + H2O = 1,2-dihydroxy-5-(methylsulfanyl)pent-1-en-3-one + phosphate. It participates in amino-acid biosynthesis; L-methionine biosynthesis via salvage pathway; L-methionine from S-methyl-5-thio-alpha-D-ribose 1-phosphate: step 4/6. Its function is as follows. Dephosphorylates 2-hydroxy-3-keto-5-methylthiopentenyl-1-phosphate (HK-MTPenyl-1-P) yielding 1,2-dihydroxy-3-keto-5-methylthiopentene (DHK-MTPene). The chain is 2-hydroxy-3-keto-5-methylthiopentenyl-1-phosphate phosphatase from Geobacillus kaustophilus (strain HTA426).